The chain runs to 363 residues: NAD(P)H-quinone oxidoreductase subunit 1, chloroplastic (363 aa).

The next 6 membrane-spanning stretches (helical) occupy residues 27–47 (VWLLIPIFILVLGIVIGVLVI), 104–124 (IAVIAILLSYLVIPFGYHLVL), 127–147 (LSIGVFLWIAISSIAPIGLLM), 248–268 (YSGIKFGLFYVASYLNLLVSS), 300–320 (VFGMTIGIFITLAKAYLFLFI), and 343–363 (FLLPISLGNLLLTTSFQLFSL).

Belongs to the complex I subunit 1 family. In terms of assembly, NDH is composed of at least 16 different subunits, 5 of which are encoded in the nucleus.

The protein localises to the plastid. It localises to the chloroplast thylakoid membrane. It catalyses the reaction a plastoquinone + NADH + (n+1) H(+)(in) = a plastoquinol + NAD(+) + n H(+)(out). The catalysed reaction is a plastoquinone + NADPH + (n+1) H(+)(in) = a plastoquinol + NADP(+) + n H(+)(out). In terms of biological role, NDH shuttles electrons from NAD(P)H:plastoquinone, via FMN and iron-sulfur (Fe-S) centers, to quinones in the photosynthetic chain and possibly in a chloroplast respiratory chain. The immediate electron acceptor for the enzyme in this species is believed to be plastoquinone. Couples the redox reaction to proton translocation, and thus conserves the redox energy in a proton gradient. The chain is NAD(P)H-quinone oxidoreductase subunit 1, chloroplastic from Ranunculus macranthus (Large buttercup).